The chain runs to 37 residues: Cytochrome b6-f complex subunit 5 (37 aa).

A helical membrane pass occupies residues 5–25; sequence LLSGIVLGLVPVTITGLFVAA.

This sequence belongs to the PetG family. In terms of assembly, the 4 large subunits of the cytochrome b6-f complex are cytochrome b6, subunit IV (17 kDa polypeptide, PetD), cytochrome f and the Rieske protein, while the 4 small subunits are PetG, PetL, PetM and PetN. The complex functions as a dimer.

The protein localises to the plastid. Its subcellular location is the chloroplast thylakoid membrane. Functionally, component of the cytochrome b6-f complex, which mediates electron transfer between photosystem II (PSII) and photosystem I (PSI), cyclic electron flow around PSI, and state transitions. PetG is required for either the stability or assembly of the cytochrome b6-f complex. This chain is Cytochrome b6-f complex subunit 5, found in Emiliania huxleyi (Coccolithophore).